The chain runs to 109 residues: N-cym protein (109 aa).

Interacts with MYCN and GSK3B. In terms of tissue distribution, expressed in the neuronal cells of the cerebrum and cerebellum, spermatocytes of the testis, pancreatic cells and also the heart. Expressed in both primary and metastatic neuroblastomas and in thyroid tumors (at protein level). Expression is associated with poor prognosis in neuroblastoma. Expressed in the fetal brain, lung, liver and kidney at varying low levels.

The protein localises to the cytoplasm. The protein resides in the nucleus. Regulates stability of MYCN in neuroblastoma cells by inhibiting GSK3B-mediated MYCN phosphorylation. Inhibits GSK3B activity by promoting its phosphorylation at 'Ser-9'. This chain is N-cym protein (MYCNOS), found in Homo sapiens (Human).